Here is a 634-residue protein sequence, read N- to C-terminus: Chaperone protein HtpG (634 aa).

An a; substrate-binding region spans residues 1-344; it reads MNETVANNKE…SNDLPLNVSR (344 aa). Residues 345 to 561 form a b region; that stretch reads EILQDNKVTQ…DFEMGTQMAK (217 aa). The c stretch occupies residues 562 to 634; the sequence is LLAAAGQAVP…TAINSLLTKG (73 aa).

The protein belongs to the heat shock protein 90 family. As to quaternary structure, homodimer.

Its subcellular location is the cytoplasm. Functionally, molecular chaperone. Has ATPase activity. In Vibrio vulnificus (strain CMCP6), this protein is Chaperone protein HtpG.